The sequence spans 237 residues: Uridylate kinase (237 aa).

11–14 (KLSG) is a binding site for ATP. UMP is bound at residue G53. Residues G54 and R58 each coordinate ATP. UMP-binding positions include D73 and 134-141 (TGNPFFTT). ATP is bound by residues T161, Y167, and D170.

Belongs to the UMP kinase family. In terms of assembly, homohexamer.

The protein resides in the cytoplasm. It catalyses the reaction UMP + ATP = UDP + ADP. Its pathway is pyrimidine metabolism; CTP biosynthesis via de novo pathway; UDP from UMP (UMPK route): step 1/1. Its activity is regulated as follows. Inhibited by UTP. Catalyzes the reversible phosphorylation of UMP to UDP. The protein is Uridylate kinase of Burkholderia lata (strain ATCC 17760 / DSM 23089 / LMG 22485 / NCIMB 9086 / R18194 / 383).